The following is a 505-amino-acid chain: Structural protein 27 (505 aa).

Hydrophobic regions lie at residues 20-40, 423-443, and 470-490; these read VSLICFLLVFSVTVPFVFSPV, MKGIGSDIQWLLFTVIIMSTI, and IGLGLLLSMVFFGIFIGLILV.

Its subcellular location is the virion. The protein is Structural protein 27 of His1 virus (isolate Australia/Victoria) (His1V).